A 439-amino-acid polypeptide reads, in one-letter code: MTKFPRWLAILVGLLFPLSALTQQQGLTIDIVGGNTAATPIAVLPMPYHDSAGAPATDVSGVVAADLNRSGQFRTLPLGQITERPTHGSEIRFPTWQALKQDYIVVGRVLDARQGTYRVEYELFDVRNGKRMLGLAMTARASAMRDVAHQMADAIYEKITGLRGAFFTRIAYVTASGSHGAMRYALMVADSDGYNPQTIVRSAEPLLSPDWSPDGKKLAYVSFEKGGSSIYIQDIATGSRELVSSFRGINAAPSFAPDGHRIALSLSRSGNPEIYVMDLVSKQLIQLTNSFGIDTEPVWSSDGKFIYFTSDRGGRPQIYKVASVGGTATRVTFQGNYNATASVSYDDKKIVVAQGSGNVYRIAMMDQSSGSTVWNTLSTGSLDESPSFAPNASMVLYAAREGGRGVLYAVSADARVRQRLVSVDSDVREPAWGPYRSVH.

The first 22 residues, 1-22 (MTKFPRWLAILVGLLFPLSALT), serve as a signal peptide directing secretion.

Belongs to the TolB family. In terms of assembly, the Tol-Pal system is composed of five core proteins: the inner membrane proteins TolA, TolQ and TolR, the periplasmic protein TolB and the outer membrane protein Pal. They form a network linking the inner and outer membranes and the peptidoglycan layer.

It localises to the periplasm. Its function is as follows. Part of the Tol-Pal system, which plays a role in outer membrane invagination during cell division and is important for maintaining outer membrane integrity. This Xylella fastidiosa (strain M12) protein is Tol-Pal system protein TolB.